We begin with the raw amino-acid sequence, 192 residues long: Inosine triphosphate pyrophosphatase (192 aa).

Residue 10–15 (TGNANK) participates in ITP binding. Glutamate 43 contacts Mg(2+). ITP contacts are provided by residues lysine 56, 74-75 (DT), lysine 91, 149-152 (FGWD), lysine 173, and 178-179 (HR).

Belongs to the HAM1 NTPase family. As to quaternary structure, homodimer. It depends on Mg(2+) as a cofactor. Mn(2+) is required as a cofactor.

The protein localises to the cytoplasm. Its subcellular location is the nucleus. It catalyses the reaction ITP + H2O = IMP + diphosphate + H(+). It carries out the reaction dITP + H2O = dIMP + diphosphate + H(+). The enzyme catalyses XTP + H2O = XMP + diphosphate + H(+). In terms of biological role, pyrophosphatase that hydrolyzes non-canonical purine nucleotides such as inosine triphosphate (ITP), deoxyinosine triphosphate (dITP) or xanthosine 5'-triphosphate (XTP) to their respective monophosphate derivatives. The enzyme does not distinguish between the deoxy- and ribose forms. Probably excludes non-canonical purines from RNA and DNA precursor pools, thus preventing their incorporation into RNA and DNA and avoiding chromosomal lesions. This Candida glabrata (strain ATCC 2001 / BCRC 20586 / JCM 3761 / NBRC 0622 / NRRL Y-65 / CBS 138) (Yeast) protein is Inosine triphosphate pyrophosphatase.